We begin with the raw amino-acid sequence, 326 residues long: Probable cell division protein WhiA (326 aa).

Positions 275–308 (SLDELGRLADPPMTKDAIAGRIRRLLAMADKRAL) form a DNA-binding region, H-T-H motif.

This sequence belongs to the WhiA family.

Its function is as follows. Involved in cell division and chromosome segregation. The sequence is that of Probable cell division protein WhiA from Arthrobacter sp. (strain FB24).